Consider the following 784-residue polypeptide: MPRALWPAWVWAIIILSMEGASDKASSLSCDPTGVCDGRSRSLNSIPSGLTAGVKSLDLSNNEITYVGNRDLQRCVNLKTLRLGANEIHTVEEDSFFHLRNLEYLDLSYNRLSNLSSSWFRSLYVLKFLNLLGNLYKTLGETSLFSHLPDLRTLKVGNSNSFTEIHEKDFTGLTFLEELEISAQNLQIYVPKSLKSIQNISHLILHLKQPVLLVDILVDIVSSLDCLELRDTNLHTFHFSEASISEMSTSVKKLIFRNVQFTDESFVEVVKLFNYVSGIVEVEFDDCTHDGIGDFRALSLDRIRHLGNVETLTIRKLHIPQFFLFQDLSSIYPLTGKVKRVTIENSKVFLVPCLLSQHLKSLEYLDLSENLMSEETLKNSACKDAWPFLQTLVLRQNRLKSLEKTGELLLTLKNLNNLDISKNNFLSMPETCQWPGKMKQLNLSSTKIRSLTQCLPQTLEILDVSNNNLDSFSLILPQLKELYISRNKLKTLPDASFLPVLSVMGISKNIINTFSKEQLDSFQQLKTLEAGGNNFICSCDFLSFTQGQQALGRVLVDWPDDYRCDSPSHVRGQRLQDARLSLSECHRAAVVSAACCALFLFLLLTGVLCHRFHGLWYMKIMWAWLQAKRKPRKAPRRDICYDAFVSYSERDSYWVENLMVQELEHFNPPFKLCLHKRDFIPGKWIIDNIIDSIEKSHKTIFVLSENFVKSEWCKYELDFSHFRLFDENNDAVILILLEPIDKKAIPQRFCKLRKIMNTKTYLEWPLDETQQEGFWLNLRAAIRS.

An N-terminal signal peptide occupies residues 1–20 (MPRALWPAWVWAIIILSMEG). Topologically, residues 21 to 587 (ASDKASSLSC…ARLSLSECHR (567 aa)) are extracellular. A disulfide bond links Cys30 and Cys36. LRR repeat units lie at residues 54 to 77 (VKSL…RCVN), 78 to 101 (LKTL…HLRN), 102 to 125 (LEYL…SLYV), 126 to 150 (LKFL…HLPD), 151 to 175 (LRTL…GLTF), 176 to 199 (LEEL…SIQN), 200 to 223 (ISHL…IVSS), 224 to 250 (LDCL…MSTS), 251 to 278 (VKKL…YVSG), 279 to 308 (IVEV…HLGN), 309 to 337 (VETL…LTGK), 338 to 361 (VKRV…HLKS), 362 to 388 (LEYL…AWPF), 389 to 414 (LQTL…TLKN), 415 to 437 (LNNL…WPGK), 438 to 457 (MKQL…CLPQ), 458 to 478 (TLEI…ILPQ), 479 to 500 (LKEL…FLPV), and 501 to 524 (LSVM…SFQQ). Asn114 carries an N-linked (GlcNAc...) asparagine glycan. Residue Asn199 is glycosylated (N-linked (GlcNAc...) asparagine). An intrachain disulfide couples Cys353 to Cys382. Cys432 and Cys454 are joined by a disulfide. The N-linked (GlcNAc...) asparagine glycan is linked to Asn442. One can recognise an LRRCT domain in the interval 525–579 (LKTLEAGGNNFICSCDFLSFTQGQQALGRVLVDWPDDYRCDSPSHVRGQRLQDAR). Residues 588 to 608 (AAVVSAACCALFLFLLLTGVL) traverse the membrane as a helical segment. The Cytoplasmic portion of the chain corresponds to 609 to 784 (CHRFHGLWYM…WLNLRAAIRS (176 aa)). The region spanning 639-782 (ICYDAFVSYS…GFWLNLRAAI (144 aa)) is the TIR domain. A Glycyl lysine isopeptide (Lys-Gly) (interchain with G-Cter in ubiquitin) cross-link involves residue Lys754. The short motif at 761-778 (YLEWPLDETQQEGFWLNL) is the ATG16L1-binding motif element.

Belongs to the Toll-like receptor family. As to quaternary structure, interacts with LY96, TLR1 and TLR6 (via extracellular domain). TLR2 seems to exist in heterodimers with either TLR1 or TLR6 before stimulation by the ligand. The heterodimers form bigger oligomers in response to their corresponding ligands as well as further heterotypic associations with other receptors such as CD14 and/or CD36. Binds MYD88 (via TIR domain). Interacts with TICAM1. Interacts with CNPY3. Interacts with ATG16L1. Interacts with PPP1R11. Interacts with TICAM2. Interacts with TIRAP. Ubiquitinated at Lys-754 by PPP1R11, leading to its degradation. Deubiquitinated by USP2. Post-translationally, glycosylation of Asn-442 is critical for secretion of the N-terminal ectodomain of TLR2.

The protein localises to the membrane. Its subcellular location is the cytoplasmic vesicle. The protein resides in the phagosome membrane. It localises to the membrane raft. Cooperates with LY96 to mediate the innate immune response to bacterial lipoproteins and other microbial cell wall components. Cooperates with TLR1 or TLR6 to mediate the innate immune response to bacterial lipoproteins or lipopeptides. Acts via MYD88 and TRAF6, leading to NF-kappa-B activation, cytokine secretion and the inflammatory response. May also promote apoptosis in response to lipoproteins. Forms activation clusters composed of several receptors depending on the ligand, these clusters trigger signaling from the cell surface and subsequently are targeted to the Golgi in a lipid-raft dependent pathway. Forms the cluster TLR2:TLR6:CD14:CD36 in response to diacylated lipopeptides and TLR2:TLR1:CD14 in response to triacylated lipopeptides. This chain is Toll-like receptor 2 (TLR2), found in Boselaphus tragocamelus (Nilgai).